Reading from the N-terminus, the 371-residue chain is tRNA-specific 2-thiouridylase MnmA (371 aa).

ATP-binding positions include 13–20 (GMSGGVDS) and methionine 39. An interaction with target base in tRNA region spans residues 99–101 (NPD). Residue cysteine 104 is the Nucleophile of the active site. Cysteine 104 and cysteine 200 are oxidised to a cystine. Residue glycine 128 coordinates ATP. The interval 150-152 (KDQ) is interaction with tRNA. Cysteine 200 functions as the Cysteine persulfide intermediate in the catalytic mechanism. Residues 308-309 (RY) form an interaction with tRNA region.

Belongs to the MnmA/TRMU family.

The protein localises to the cytoplasm. The enzyme catalyses S-sulfanyl-L-cysteinyl-[protein] + uridine(34) in tRNA + AH2 + ATP = 2-thiouridine(34) in tRNA + L-cysteinyl-[protein] + A + AMP + diphosphate + H(+). Catalyzes the 2-thiolation of uridine at the wobble position (U34) of tRNA, leading to the formation of s(2)U34. The sequence is that of tRNA-specific 2-thiouridylase MnmA from Listeria monocytogenes serotype 4a (strain HCC23).